Reading from the N-terminus, the 645-residue chain is Threonine--tRNA ligase (645 aa).

Positions 1–61 (MPAITLPDGS…SSDASVKFIT (61 aa)) constitute a TGS domain. The tract at residues 243–536 (DHRRIGREMD…LIEQYAGKFP (294 aa)) is catalytic. Zn(2+)-binding residues include Cys336, His387, and His513.

Belongs to the class-II aminoacyl-tRNA synthetase family. In terms of assembly, homodimer. Zn(2+) is required as a cofactor.

It localises to the cytoplasm. The catalysed reaction is tRNA(Thr) + L-threonine + ATP = L-threonyl-tRNA(Thr) + AMP + diphosphate + H(+). Catalyzes the attachment of threonine to tRNA(Thr) in a two-step reaction: L-threonine is first activated by ATP to form Thr-AMP and then transferred to the acceptor end of tRNA(Thr). Also edits incorrectly charged L-seryl-tRNA(Thr). This Gluconobacter oxydans (strain 621H) (Gluconobacter suboxydans) protein is Threonine--tRNA ligase.